The primary structure comprises 315 residues: Ribosomal RNA small subunit methyltransferase H (315 aa).

S-adenosyl-L-methionine is bound by residues 33–35, Asp53, Phe80, Asp101, and Gln108; that span reads AGH.

The protein belongs to the methyltransferase superfamily. RsmH family.

Its subcellular location is the cytoplasm. The catalysed reaction is cytidine(1402) in 16S rRNA + S-adenosyl-L-methionine = N(4)-methylcytidine(1402) in 16S rRNA + S-adenosyl-L-homocysteine + H(+). In terms of biological role, specifically methylates the N4 position of cytidine in position 1402 (C1402) of 16S rRNA. In Natranaerobius thermophilus (strain ATCC BAA-1301 / DSM 18059 / JW/NM-WN-LF), this protein is Ribosomal RNA small subunit methyltransferase H.